The primary structure comprises 229 residues: MNQWEELQESVGFDFQNVELLQQAFTHSSYVNEHRRENVKDNERLEFLGDAVLELTVSDYLFNKYPDMAEGHMTKMRAAIVCEPSLVEFAEAVHFSKYVRLGKGEEKAGGRTRPALLADVFESFIGALYLDNGIDKVVKFLERVIFPKIDAGAYLQTVDYKTQLQEIVQRDRDVLIEYDILGETGPAHNKAFDAQVIVNGQVLGKGSGRTKKQAEQSAAQFAINQLTHR.

An RNase III domain is found at 4-133 (WEELQESVGF…FIGALYLDNG (130 aa)). Glu-46 lines the Mg(2+) pocket. The active site involves Asp-50. Mg(2+)-binding residues include Asp-119 and Glu-122. Residue Glu-122 is part of the active site. A DRBM domain is found at 159-228 (DYKTQLQEIV…AQFAINQLTH (70 aa)).

The protein belongs to the ribonuclease III family. Homodimer. Mg(2+) serves as cofactor.

The protein localises to the cytoplasm. The enzyme catalyses Endonucleolytic cleavage to 5'-phosphomonoester.. Functionally, digests double-stranded RNA. Involved in the processing of primary rRNA transcript to yield the immediate precursors to the large and small rRNAs (23S and 16S). Processes some mRNAs, and tRNAs when they are encoded in the rRNA operon. Processes pre-crRNA and tracrRNA of type II CRISPR loci if present in the organism. In Listeria innocua serovar 6a (strain ATCC BAA-680 / CLIP 11262), this protein is Ribonuclease 3.